Here is a 234-residue protein sequence, read N- to C-terminus: Zinc finger FYVE domain-containing protein 21 (234 aa).

The FYVE-type zinc finger occupies 44-104 (DKECPRCMQC…QCADCALVSH (61 aa)). Zn(2+)-binding residues include Cys50, Cys53, Cys66, Cys69, Cys74, Cys77, Cys96, and Cys99. A PH-like region spans residues 107 to 234 (AEFYDKQLKV…TKLLYESRDQ (128 aa)).

As to quaternary structure, interacts with PTK2/FAK1.

It is found in the cell junction. The protein resides in the focal adhesion. It localises to the cytoplasmic vesicle. The protein localises to the endosome. Its function is as follows. Plays a role in cell adhesion, and thereby in cell motility which requires repeated formation and disassembly of focal adhesions. Regulates microtubule-induced PTK2/FAK1 dephosphorylation, an event important for focal adhesion disassembly, as well as integrin beta-1/ITGB1 cell surface expression. This Rattus norvegicus (Rat) protein is Zinc finger FYVE domain-containing protein 21 (Zfyve21).